The chain runs to 293 residues: Movement protein BC1 (293 aa).

It belongs to the begomovirus movement protein BC1 family. As to quaternary structure, binds to dimeric supercoiled plasmid DNA. In terms of processing, phosphorylated.

It localises to the host cell membrane. The protein resides in the host microsome membrane. It is found in the host endoplasmic reticulum membrane. In terms of biological role, transports viral genome to neighboring plant cells directly through plasmosdesmata, without any budding. The movement protein allows efficient cell to cell propagation, by bypassing the host cell wall barrier. Begomovirus genome is shuttled out of nucleus by Nuclear shuttle protein (NSP) and the movement protein transports the DNA-NSP complex to cell plasmodesmata and facilitates further movement across the cell wall. The polypeptide is Movement protein BC1 (Macroptilium lathyroides (Lima bean)).